Here is a 475-residue protein sequence, read N- to C-terminus: Ribulose bisphosphate carboxylase large chain (475 aa).

The propeptide occupies 1 to 2; sequence MS. At Pro3 the chain carries N-acetylproline. Position 14 is an N6,N6,N6-trimethyllysine (Lys14). Substrate is bound by residues Asn123 and Thr173. Lys175 serves as the catalytic Proton acceptor. Lys177 is a substrate binding site. 3 residues coordinate Mg(2+): Lys201, Asp203, and Glu204. Lys201 carries the N6-carboxylysine modification. The Proton acceptor role is filled by His294. Residues Arg295, His327, and Ser379 each contribute to the substrate site.

Belongs to the RuBisCO large chain family. Type I subfamily. In terms of assembly, heterohexadecamer of 8 large chains and 8 small chains; disulfide-linked. The disulfide link is formed within the large subunit homodimers. It depends on Mg(2+) as a cofactor. Post-translationally, the disulfide bond which can form in the large chain dimeric partners within the hexadecamer appears to be associated with oxidative stress and protein turnover.

Its subcellular location is the plastid. It localises to the chloroplast. The enzyme catalyses 2 (2R)-3-phosphoglycerate + 2 H(+) = D-ribulose 1,5-bisphosphate + CO2 + H2O. The catalysed reaction is D-ribulose 1,5-bisphosphate + O2 = 2-phosphoglycolate + (2R)-3-phosphoglycerate + 2 H(+). Its function is as follows. RuBisCO catalyzes two reactions: the carboxylation of D-ribulose 1,5-bisphosphate, the primary event in carbon dioxide fixation, as well as the oxidative fragmentation of the pentose substrate in the photorespiration process. Both reactions occur simultaneously and in competition at the same active site. This chain is Ribulose bisphosphate carboxylase large chain, found in Keteleeria davidiana (David's keteleeria).